Reading from the N-terminus, the 207-residue chain is ATP synthase subunit b 2 (207 aa).

Positions 1–31 (MVAQAAPPAGTAGQGTHEAASAAHGAAAAHG) are enriched in low complexity. The tract at residues 1–41 (MVAQAAPPAGTAGQGTHEAASAAHGAAAAHGAAEEGHGKKS) is disordered. A helical transmembrane segment spans residues 48-70 (ATTFASQLLWLVLSFGLLYLLMS).

Belongs to the ATPase B chain family. F-type ATPases have 2 components, F(1) - the catalytic core - and F(0) - the membrane proton channel. F(1) has five subunits: alpha(3), beta(3), gamma(1), delta(1), epsilon(1). F(0) has three main subunits: a(1), b(2) and c(10-14). The alpha and beta chains form an alternating ring which encloses part of the gamma chain. F(1) is attached to F(0) by a central stalk formed by the gamma and epsilon chains, while a peripheral stalk is formed by the delta and b chains.

It is found in the cell inner membrane. F(1)F(0) ATP synthase produces ATP from ADP in the presence of a proton or sodium gradient. F-type ATPases consist of two structural domains, F(1) containing the extramembraneous catalytic core and F(0) containing the membrane proton channel, linked together by a central stalk and a peripheral stalk. During catalysis, ATP synthesis in the catalytic domain of F(1) is coupled via a rotary mechanism of the central stalk subunits to proton translocation. Its function is as follows. Component of the F(0) channel, it forms part of the peripheral stalk, linking F(1) to F(0). The sequence is that of ATP synthase subunit b 2 from Xanthobacter autotrophicus (strain ATCC BAA-1158 / Py2).